Consider the following 182-residue polypeptide: Protein canopy homolog 2 (182 aa).

The signal sequence occupies residues 1-20 (MKGWGWLALLLGVLLGTAWA). A Saposin B-type domain is found at 24 to 175 (QDLHCGACRA…KRTDLCDHAL (152 aa)). Disulfide bonds link Cys28–Cys171, Cys31–Cys164, and Cys86–Cys137. The residue at position 115 (Ser115) is a Phosphoserine. A Prevents secretion from ER motif is present at residues 179–182 (HDEL).

It belongs to the canopy family. As to quaternary structure, interacts with MYLIP/MIR.

Its subcellular location is the endoplasmic reticulum. Functionally, positive regulator of neurite outgrowth by stabilizing myosin regulatory light chain (MRLC). It prevents MIR-mediated MRLC ubiquitination and its subsequent proteasomal degradation. The sequence is that of Protein canopy homolog 2 (Cnpy2) from Mus musculus (Mouse).